Here is a 273-residue protein sequence, read N- to C-terminus: (5R)-carbapenem-3-carboxylate synthase (273 aa).

His101 and Asp103 together coordinate Fe cation. Residue Gly104 coordinates substrate. Position 130 (Thr130) interacts with 2-oxoglutarate. His251 provides a ligand contact to Fe cation. 2-oxoglutarate-binding residues include Arg253, Arg263, and Arg267.

It belongs to the TfdA dioxygenase family. In terms of assembly, homohexamer. Dimer of trimers. Fe(2+) serves as cofactor.

It localises to the cytoplasm. The enzyme catalyses (3S,5S)-carbapenam-3-caboxylate + 2-oxoglutarate + O2 = (5R)-carbapenem-3-carboxylate + succinate + CO2 + H2O. With respect to regulation, inhibited by L-N-acetylproline and by D-N-acetylproline. Catalyzes the Fe(2+) and alpha-ketoglutarate-dependent conversion of (3S,5S)-carbapenam to (5R)-carbapenem, an essential step in carbapenem antibiotic biosynthesis. The polypeptide is (5R)-carbapenem-3-carboxylate synthase (carC) (Pectobacterium carotovorum subsp. carotovorum (Erwinia carotovora subsp. carotovora)).